The primary structure comprises 78 residues: Structural DNA-binding protein p10 (78 aa).

The span at 1 to 25 shows a compositional bias: low complexity; sequence MPTKAGTKSTANKKTTKGSSKSGSA. Positions 1–41 are disordered; sequence MPTKAGTKSTANKKTTKGSSKSGSARGHTGKTHAPPSMHSG.

This sequence belongs to the asfivirus P10 family.

It localises to the virion. Functionally, may play a role in genome packaging through direct interaction with viral DNA. Binds to ssDNA and dsDNA with the same apparent affinity in vitro. This is Structural DNA-binding protein p10 from African swine fever virus (isolate Warthog/Namibia/Wart80/1980) (ASFV).